Consider the following 91-residue polypeptide: Non-specific lipid-transfer protein 1 (91 aa).

Cystine bridges form between Cys3–Cys50, Cys13–Cys27, Cys28–Cys73, and Cys48–Cys87. A 1,2-diacyl-sn-glycero-3-phosphocholine is bound by residues Arg44 and Tyr79.

In terms of assembly, monomer.

Functionally, plant non-specific lipid-transfer proteins transfer phospholipids as well as galactolipids across membranes. May play a role in wax or cutin deposition in the cell walls of expanding epidermal cells and certain secretory tissues. Has antifungal activity against F.solani, F.oxysporum, P.aphanidermatum and S.rolfsii. Has antibacterial activity against the Gram-positive bacterium S.aureus but not against the Gram-negative bacterium S.typhimurium. This chain is Non-specific lipid-transfer protein 1, found in Vigna radiata var. radiata (Mung bean).